The sequence spans 307 residues: Glutathione synthetase (307 aa).

The region spanning lysine 120 to leucine 304 is the ATP-grasp domain. Alanine 146–glycine 202 contacts ATP. Glutamate 275 and asparagine 277 together coordinate Mg(2+).

The protein belongs to the prokaryotic GSH synthase family. The cofactor is Mg(2+). Requires Mn(2+) as cofactor.

The catalysed reaction is gamma-L-glutamyl-L-cysteine + glycine + ATP = glutathione + ADP + phosphate + H(+). The protein operates within sulfur metabolism; glutathione biosynthesis; glutathione from L-cysteine and L-glutamate: step 2/2. The polypeptide is Glutathione synthetase (Prochlorococcus marinus subsp. pastoris (strain CCMP1986 / NIES-2087 / MED4)).